Reading from the N-terminus, the 402-residue chain is Putative F-box protein At3g23960 (402 aa).

Positions 1-23 (MRSRQLHNVSEDRETLSRRNKRS) are disordered. One can recognise an F-box domain in the interval 26–73 (SLNGHIPIDLLIEIFLKLPVKSIATCRSVSKFWTYVLGRQDFTELFLT).

This chain is Putative F-box protein At3g23960, found in Arabidopsis thaliana (Mouse-ear cress).